The following is a 275-amino-acid chain: Glucan endo-1,3-beta-glucosidase, acidic isoform PR-N (275 aa).

Glutamate 196 serves as the catalytic Nucleophile.

It belongs to the glycosyl hydrolase 17 family. In terms of processing, the N-terminus is blocked.

It is found in the secreted. The protein resides in the extracellular space. It carries out the reaction Hydrolysis of (1-&gt;3)-beta-D-glucosidic linkages in (1-&gt;3)-beta-D-glucans.. Implicated in the defense of plants against pathogens. The chain is Glucan endo-1,3-beta-glucosidase, acidic isoform PR-N (PRN) from Nicotiana tabacum (Common tobacco).